The primary structure comprises 218 residues: 23 kDa integral membrane protein (218 aa).

Over 1–12 (MATLGTGMRCLK) the chain is Cytoplasmic. A helical transmembrane segment spans residues 13–36 (SCVFVLNIICLLCSLVLIGAGAYV). At 37–55 (EVKFSQYGDNLHKVWQAAP) the chain is on the extracellular side. A helical transmembrane segment spans residues 56–71 (IAIIVVGVIILIVSFL). Topologically, residues 72–82 (GCCGAIKENVC) are cytoplasmic. A helical transmembrane segment spans residues 83–108 (MLYMYAFFLVVLLIAELAAAIVAVVY). The Extracellular portion of the chain corresponds to 109 to 183 (KDRIDSEIDA…SVFGAFLKRN (75 aa)). Asparagine 165 is a glycosylation site (N-linked (GlcNAc...) asparagine). Residues 184-205 (LVIVACVAFGVCFFQLLSIVIA) traverse the membrane as a helical segment. The Cytoplasmic segment spans residues 206–218 (CCLGRQIKEYENV).

The protein belongs to the tetraspanin (TM4SF) family.

The protein resides in the membrane. The chain is 23 kDa integral membrane protein from Schistosoma mansoni (Blood fluke).